The primary structure comprises 598 residues: 4-coumarate--CoA ligase-like 6 (598 aa).

6 residues coordinate ATP: S232, S233, G234, T235, T236, and K240. R318 contributes to the CoA binding site. Residues D320 to Q389 are SBD1. (E)-4-coumaroyl-AMP contacts are provided by G367, Q389, and T394. The ATP site is built by Q389, T394, D475, and R490. The SBD2 stretch occupies residues S390–Y454. 2 residues coordinate (E)-4-coumaroyl-AMP: K492 and K496. K498 and G499 together coordinate CoA. K581 contributes to the ATP binding site.

Belongs to the ATP-dependent AMP-binding enzyme family. Requires Mg(2+) as cofactor.

It catalyses the reaction (E)-4-coumarate + ATP + CoA = (E)-4-coumaroyl-CoA + AMP + diphosphate. It carries out the reaction (E)-4-coumarate + ATP + H(+) = (E)-4-coumaroyl-AMP + diphosphate. The catalysed reaction is (E)-4-coumaroyl-AMP + CoA = (E)-4-coumaroyl-CoA + AMP + H(+). Its function is as follows. Carboxylate--CoA ligase that may use 4-coumarate as substrate. Follows a two-step reaction mechanism, wherein the carboxylate substrate first undergoes adenylation by ATP, followed by a thioesterification in the presence of CoA to yield the final CoA thioester. This is 4-coumarate--CoA ligase-like 6 (4CLL6) from Oryza sativa subsp. japonica (Rice).